We begin with the raw amino-acid sequence, 234 residues long: Glutamine synthetase (234 aa).

Positions 1 to 234 (KAQEPWFGIE…TRLLVETTLL (234 aa)) constitute a GS catalytic domain. The tract at residues 126–157 (GSGGHVNFSNRQPESPPAGKQSRSSAKKLGKR) is disordered.

Belongs to the glutamine synthetase family. Homooctamer.

The protein resides in the cytoplasm. It catalyses the reaction L-glutamate + NH4(+) + ATP = L-glutamine + ADP + phosphate + H(+). This Dunaliella salina (Green alga) protein is Glutamine synthetase.